The chain runs to 119 residues: MPRVKGGTVSRQRRKKVLKLAKGYFGSKHRLYKVANQQVMKSGNYAFRDRRQKKRDFRKLWITRINAAARMNGLSYSRLMHGLKLSGIEVNRKMLADLAVNDLTAFNQLADAAKAQLDK.

It belongs to the bacterial ribosomal protein bL20 family.

Functionally, binds directly to 23S ribosomal RNA and is necessary for the in vitro assembly process of the 50S ribosomal subunit. It is not involved in the protein synthesizing functions of that subunit. This is Large ribosomal subunit protein bL20 from Bacillus velezensis (strain DSM 23117 / BGSC 10A6 / LMG 26770 / FZB42) (Bacillus amyloliquefaciens subsp. plantarum).